A 97-amino-acid chain; its full sequence is Large ribosomal subunit protein uL23 (97 aa).

It belongs to the universal ribosomal protein uL23 family. As to quaternary structure, part of the 50S ribosomal subunit. Contacts protein L29, and trigger factor when it is bound to the ribosome.

One of the early assembly proteins it binds 23S rRNA. One of the proteins that surrounds the polypeptide exit tunnel on the outside of the ribosome. Forms the main docking site for trigger factor binding to the ribosome. The chain is Large ribosomal subunit protein uL23 from Allorhizobium ampelinum (strain ATCC BAA-846 / DSM 112012 / S4) (Agrobacterium vitis (strain S4)).